The sequence spans 122 residues: Large ribosomal subunit protein uL14 (122 aa).

It belongs to the universal ribosomal protein uL14 family. In terms of assembly, part of the 50S ribosomal subunit. Forms a cluster with proteins L3 and L19. In the 70S ribosome, L14 and L19 interact and together make contacts with the 16S rRNA in bridges B5 and B8.

Functionally, binds to 23S rRNA. Forms part of two intersubunit bridges in the 70S ribosome. The polypeptide is Large ribosomal subunit protein uL14 (Lactobacillus helveticus (strain DPC 4571)).